We begin with the raw amino-acid sequence, 328 residues long: Probable cell division protein WhiA (328 aa).

A DNA-binding region (H-T-H motif) is located at residues Ser-275–Glu-308.

The protein belongs to the WhiA family.

In terms of biological role, involved in cell division and chromosome segregation. The chain is Probable cell division protein WhiA from Corynebacterium jeikeium (strain K411).